A 98-amino-acid polypeptide reads, in one-letter code: Large ribosomal subunit protein uL23 (98 aa).

The protein belongs to the universal ribosomal protein uL23 family. In terms of assembly, part of the 50S ribosomal subunit. Contacts protein L29, and trigger factor when it is bound to the ribosome.

One of the early assembly proteins it binds 23S rRNA. One of the proteins that surrounds the polypeptide exit tunnel on the outside of the ribosome. Forms the main docking site for trigger factor binding to the ribosome. This is Large ribosomal subunit protein uL23 from Sorangium cellulosum (strain So ce56) (Polyangium cellulosum (strain So ce56)).